A 64-amino-acid polypeptide reads, in one-letter code: Large ribosomal subunit protein bL28 (64 aa).

Residues 1–23 (MARKDQISHRGPLSGNNRSHALN) are disordered.

Belongs to the bacterial ribosomal protein bL28 family.

The protein is Large ribosomal subunit protein bL28 of Mesomycoplasma hyopneumoniae (strain 232) (Mycoplasma hyopneumoniae).